A 131-amino-acid chain; its full sequence is D-ribose pyranase (131 aa).

The Proton donor role is filled by His20. Residues Asp28, His98, and 120-122 (YCN) each bind substrate.

This sequence belongs to the RbsD / FucU family. RbsD subfamily. In terms of assembly, homodecamer.

The protein resides in the cytoplasm. It catalyses the reaction beta-D-ribopyranose = beta-D-ribofuranose. It functions in the pathway carbohydrate metabolism; D-ribose degradation; D-ribose 5-phosphate from beta-D-ribopyranose: step 1/2. In terms of biological role, catalyzes the interconversion of beta-pyran and beta-furan forms of D-ribose. This is D-ribose pyranase from Coprothermobacter proteolyticus (strain ATCC 35245 / DSM 5265 / OCM 4 / BT).